Here is a 247-residue protein sequence, read N- to C-terminus: tRNA pseudouridine synthase A (247 aa).

Asp-53 acts as the Nucleophile in catalysis. Residue Tyr-111 coordinates substrate.

This sequence belongs to the tRNA pseudouridine synthase TruA family. Homodimer.

The enzyme catalyses uridine(38/39/40) in tRNA = pseudouridine(38/39/40) in tRNA. Functionally, formation of pseudouridine at positions 38, 39 and 40 in the anticodon stem and loop of transfer RNAs. This chain is tRNA pseudouridine synthase A, found in Lacticaseibacillus casei (strain BL23) (Lactobacillus casei).